We begin with the raw amino-acid sequence, 106 residues long: Putative membrane protein insertion efficiency factor (106 aa).

It belongs to the UPF0161 family.

It localises to the cell inner membrane. Functionally, could be involved in insertion of integral membrane proteins into the membrane. This chain is Putative membrane protein insertion efficiency factor, found in Acinetobacter baumannii (strain AB307-0294).